Consider the following 264-residue polypeptide: Thiazole synthase (264 aa).

Lys106 serves as the catalytic Schiff-base intermediate with DXP. 1-deoxy-D-xylulose 5-phosphate-binding positions include Gly167, 193 to 194, and 215 to 216; these read AG and NS.

The protein belongs to the ThiG family. As to quaternary structure, homotetramer. Forms heterodimers with either ThiH or ThiS.

The protein resides in the cytoplasm. The enzyme catalyses [ThiS sulfur-carrier protein]-C-terminal-Gly-aminoethanethioate + 2-iminoacetate + 1-deoxy-D-xylulose 5-phosphate = [ThiS sulfur-carrier protein]-C-terminal Gly-Gly + 2-[(2R,5Z)-2-carboxy-4-methylthiazol-5(2H)-ylidene]ethyl phosphate + 2 H2O + H(+). It participates in cofactor biosynthesis; thiamine diphosphate biosynthesis. In terms of biological role, catalyzes the rearrangement of 1-deoxy-D-xylulose 5-phosphate (DXP) to produce the thiazole phosphate moiety of thiamine. Sulfur is provided by the thiocarboxylate moiety of the carrier protein ThiS. In vitro, sulfur can be provided by H(2)S. The chain is Thiazole synthase from Azotobacter vinelandii (strain DJ / ATCC BAA-1303).